The sequence spans 384 residues: MAP kinase-activated protein kinase 3 (384 aa).

Position 1 is an N-acetylmethionine (Met-1). Positions 1–33 are disordered; it reads MDGETAGEKGSLVPQPGALGAPALGGAPAPGVR. Residues 14 to 31 are compositionally biased toward low complexity; that stretch reads PQPGALGAPALGGAPAPG. The region spanning 46 to 306 is the Protein kinase domain; the sequence is QLSKQVLGLG…IMQFMNHPWI (261 aa). ATP contacts are provided by residues 52–60 and Lys-75; that span reads LGLGVNGKV. The Proton acceptor role is filled by Asp-168. Residue Thr-203 is modified to Phosphothreonine; by MAPK14. Residue Ser-253 is modified to Phosphoserine; by MAPK14. Ser-309 is modified (phosphoserine; by autocatalysis). The autoinhibitory helix stretch occupies residues 309–345; the sequence is SMEVPQTPLHTARVLEEDKDHWDDVKEEMTSALATMR. Position 315 is a phosphothreonine; by MAPK14 (Thr-315). The Nuclear export signal (NES) signature appears at 337 to 346; the sequence is MTSALATMRV. Residues 347 to 371 are p38 MAPK-binding site; that stretch reads DYDQVKIKDLKTSNNRLLNKRRKKQ. 2 consecutive short sequence motifs (bipartite nuclear localization signal) follow at residues 352 to 355 and 366 to 370; these read KIKD and KRRKK. Positions 359–384 are disordered; it reads SNNRLLNKRRKKQGGSSSASPGCNNQ. Residues 372-384 show a composition bias toward polar residues; that stretch reads GGSSSASPGCNNQ.

This sequence belongs to the protein kinase superfamily. CAMK Ser/Thr protein kinase family. In terms of assembly, heterodimer with p38-alpha/MAPK14. The heterodimer with p38-alpha/MAPK14 forms a stable complex: molecules are positioned 'face to face' so that the ATP-binding sites of both kinases are at the heterodimer interface. Interacts with TCF3 and with polycomb proteins, such as PCH2 and BMI1/PCGF4. Post-translationally, phosphorylated and activated by MAPK1/ERK2 and MAPK3/ERK1. Phosphorylated and activated by MAP kinase p38-alpha/MAPK14 at Thr-203, Ser-253 and Thr-315.

The protein localises to the nucleus. It localises to the cytoplasm. The catalysed reaction is L-seryl-[protein] + ATP = O-phospho-L-seryl-[protein] + ADP + H(+). It carries out the reaction L-threonyl-[protein] + ATP = O-phospho-L-threonyl-[protein] + ADP + H(+). Its activity is regulated as follows. Activated following phosphorylation by p38-alpha/MAPK14 following various stresses. Inhibited by ligand 5B (2'-[2-(1,3-benzodioxol-5-yl)pyrimidin-4-yl]-5',6'-dihydrospiro[piperidine-4,7'-pyrrolo[3,2-c]pyridin]- 4'(1'h)-one) and ligand P4O (2-[2-(2-fluorophenyl)pyridin-4-yl]-1,5,6,7-tetrahydro- 4h-pyrrolo[3,2-c]pyridin-4-one), 2 ATP-competitive inhibitors. Its function is as follows. Stress-activated serine/threonine-protein kinase involved in cytokines production, endocytosis, cell migration, chromatin remodeling and transcriptional regulation. Following stress, it is phosphorylated and activated by MAP kinase p38-alpha/MAPK14, leading to phosphorylation of substrates. Phosphorylates serine in the peptide sequence, Hyd-X-R-X(2)-S, where Hyd is a large hydrophobic residue. MAPKAPK2 and MAPKAPK3, share the same function and substrate specificity, but MAPKAPK3 kinase activity and level in protein expression are lower compared to MAPKAPK2. Phosphorylates HSP27/HSPB1, KRT18, KRT20, RCSD1, RPS6KA3, TAB3 and TTP/ZFP36. Mediates phosphorylation of HSP27/HSPB1 in response to stress, leading to dissociate HSP27/HSPB1 from large small heat-shock protein (sHsps) oligomers and impair their chaperone activities and ability to protect against oxidative stress effectively. Involved in inflammatory response by regulating tumor necrosis factor (TNF) and IL6 production post-transcriptionally: acts by phosphorylating AU-rich elements (AREs)-binding proteins, such as TTP/ZFP36, leading to regulate the stability and translation of TNF and IL6 mRNAs. Phosphorylation of TTP/ZFP36, a major post-transcriptional regulator of TNF, promotes its binding to 14-3-3 proteins and reduces its ARE mRNA affinity leading to inhibition of dependent degradation of ARE-containing transcript. Involved in toll-like receptor signaling pathway (TLR) in dendritic cells: required for acute TLR-induced macropinocytosis by phosphorylating and activating RPS6KA3. Also acts as a modulator of Polycomb-mediated repression. In Rattus norvegicus (Rat), this protein is MAP kinase-activated protein kinase 3 (Mapkapk3).